The chain runs to 198 residues: dITP/XTP pyrophosphatase (198 aa).

7–12 (TRNAGK) contributes to the substrate binding site. Glutamate 40 and aspartate 69 together coordinate Mg(2+). Aspartate 69 functions as the Proton acceptor in the catalytic mechanism. Substrate is bound by residues serine 70, 152–155 (FGYD), lysine 175, and 180–181 (HR).

Belongs to the HAM1 NTPase family. Homodimer. The cofactor is Mg(2+).

The enzyme catalyses XTP + H2O = XMP + diphosphate + H(+). The catalysed reaction is dITP + H2O = dIMP + diphosphate + H(+). It catalyses the reaction ITP + H2O = IMP + diphosphate + H(+). Its function is as follows. Pyrophosphatase that catalyzes the hydrolysis of nucleoside triphosphates to their monophosphate derivatives, with a high preference for the non-canonical purine nucleotides XTP (xanthosine triphosphate), dITP (deoxyinosine triphosphate) and ITP. Seems to function as a house-cleaning enzyme that removes non-canonical purine nucleotides from the nucleotide pool, thus preventing their incorporation into DNA/RNA and avoiding chromosomal lesions. This is dITP/XTP pyrophosphatase from Exiguobacterium sibiricum (strain DSM 17290 / CCUG 55495 / CIP 109462 / JCM 13490 / 255-15).